Here is a 279-residue protein sequence, read N- to C-terminus: Probable endonuclease 4 (279 aa).

H69, H109, E145, D179, H182, H216, D229, H231, and E261 together coordinate Zn(2+).

The protein belongs to the AP endonuclease 2 family. Zn(2+) is required as a cofactor.

The enzyme catalyses Endonucleolytic cleavage to 5'-phosphooligonucleotide end-products.. In terms of biological role, endonuclease IV plays a role in DNA repair. It cleaves phosphodiester bonds at apurinic or apyrimidinic (AP) sites, generating a 3'-hydroxyl group and a 5'-terminal sugar phosphate. The sequence is that of Probable endonuclease 4 from Chlorobium phaeovibrioides (strain DSM 265 / 1930) (Prosthecochloris vibrioformis (strain DSM 265)).